The primary structure comprises 162 residues: Nucleotide-binding protein Adeh_0094 (162 aa).

This sequence belongs to the YajQ family.

Functionally, nucleotide-binding protein. This chain is Nucleotide-binding protein Adeh_0094, found in Anaeromyxobacter dehalogenans (strain 2CP-C).